A 609-amino-acid polypeptide reads, in one-letter code: Replication protein A 70 kDa DNA-binding subunit (609 aa).

The interval 113-163 (GNPQPYNDGQPQPAAPAPASAPAPAPSKLQNNSAPPPSMNRGTSKLFGGGS) is disordered. The segment covering 125–137 (PAAPAPASAPAPA) has biased composition (pro residues). Positions 188–272 (WTVRARVTNK…VKNDYEMTFN (85 aa)) form a DNA-binding region, OB. Residues 472–494 (CPSQDCNKKVIDQQNGLFRCEKC) form a C4-type zinc finger.

The protein belongs to the replication factor A protein 1 family. In terms of assembly, component of the heterotrimeric canonical replication protein A complex (RPA). Interacts with rpain-a.

It localises to the nucleus. Its subcellular location is the PML body. Functionally, as part of the heterotrimeric replication protein A complex (RPA/RP-A), binds and stabilizes single-stranded DNA intermediates, that form during DNA replication or upon DNA stress. It prevents their reannealing and in parallel, recruits and activates different proteins and complexes involved in DNA metabolism. Thereby, it plays an essential role both in DNA replication and the cellular response to DNA damage. This Xenopus laevis (African clawed frog) protein is Replication protein A 70 kDa DNA-binding subunit (rpa1).